The following is a 288-amino-acid chain: Bifunctional protein FolD (288 aa).

NADP(+) is bound by residues 166 to 168 (GAS) and Ile-232.

Belongs to the tetrahydrofolate dehydrogenase/cyclohydrolase family. In terms of assembly, homodimer.

It catalyses the reaction (6R)-5,10-methylene-5,6,7,8-tetrahydrofolate + NADP(+) = (6R)-5,10-methenyltetrahydrofolate + NADPH. The enzyme catalyses (6R)-5,10-methenyltetrahydrofolate + H2O = (6R)-10-formyltetrahydrofolate + H(+). It participates in one-carbon metabolism; tetrahydrofolate interconversion. In terms of biological role, catalyzes the oxidation of 5,10-methylenetetrahydrofolate to 5,10-methenyltetrahydrofolate and then the hydrolysis of 5,10-methenyltetrahydrofolate to 10-formyltetrahydrofolate. This chain is Bifunctional protein FolD, found in Shigella dysenteriae serotype 1 (strain Sd197).